Consider the following 146-residue polypeptide: Nuclear export protein (146 aa).

Interacts with host HSC70.

Its subcellular location is the host cytoplasm. May mediate the nuclear export of encapsidated genomic RNAs (ribonucleoproteins, RNPs). Interaction of viral NEP with M1-Hsc70 is thought to promote nuclear export of the viral encapsidated genomes. In Infectious salmon anemia virus (isolate Atlantic salmon/Norway/810/9/99) (ISAV), this protein is Nuclear export protein.